The sequence spans 74 residues: DNA-directed RNA polymerase subunit omega (74 aa).

The protein belongs to the RNA polymerase subunit omega family. As to quaternary structure, the RNAP catalytic core consists of 2 alpha, 1 beta, 1 beta' and 1 omega subunit. When a sigma factor is associated with the core the holoenzyme is formed, which can initiate transcription.

It catalyses the reaction RNA(n) + a ribonucleoside 5'-triphosphate = RNA(n+1) + diphosphate. Functionally, promotes RNA polymerase assembly. Latches the N- and C-terminal regions of the beta' subunit thereby facilitating its interaction with the beta and alpha subunits. The polypeptide is DNA-directed RNA polymerase subunit omega (Marinomonas sp. (strain MWYL1)).